A 184-amino-acid chain; its full sequence is Large ribosomal subunit protein uL6 (184 aa).

The protein belongs to the universal ribosomal protein uL6 family. As to quaternary structure, part of the 50S ribosomal subunit.

Functionally, this protein binds to the 23S rRNA, and is important in its secondary structure. It is located near the subunit interface in the base of the L7/L12 stalk, and near the tRNA binding site of the peptidyltransferase center. This chain is Large ribosomal subunit protein uL6, found in Cytophaga hutchinsonii (strain ATCC 33406 / DSM 1761 / CIP 103989 / NBRC 15051 / NCIMB 9469 / D465).